We begin with the raw amino-acid sequence, 423 residues long: MAAQRVFPLSCVVQQYAWGKMGSNSEVARLLASSDPLAQISEDRPYAELWMGTHPRGDAKILDNRISQKTLGQWIADNQDSLGSKVKDTFNGKLPFLFKVLSVETALSIQAHPNKELAEKLHLQAPQHYPDANHKPEMAIALTPFQGLCGFRPVEEIVTFLTKVPEFQFLIGDNAAAQLKQSLSQDSEAVTSALRSCFSHLMKSEKKVVVEQLNLLVKRISQQVAAGNNMEDICGELLLQLHQQYPGDIGCFAIYFLNLLTLKPGEAMFLEANVPHAYLKGDCVECMACSDNTVRAGLTPKFIDVPTLCEMLSYTPSPSQDRLFPPARSPEDPYLSIYDPPVPDFTVMKVEVPGSVTEYKVLALDSASILLVVQGTVTASSPTAQAAIPLKRGGVLFIGANESVSLKLTVPKDLLMFRACCLL.

Alanine 2 bears the N-acetylalanine mark. Serine 102 and serine 108 each carry phosphoserine. Residues glutamine 110, histidine 112, glutamate 137, and histidine 276 each contribute to the Zn(2+) site. Residue arginine 295 is part of the active site.

This sequence belongs to the mannose-6-phosphate isomerase type 1 family. Zn(2+) is required as a cofactor.

It localises to the cytoplasm. The enzyme catalyses D-mannose 6-phosphate = D-fructose 6-phosphate. It participates in nucleotide-sugar biosynthesis; GDP-alpha-D-mannose biosynthesis; alpha-D-mannose 1-phosphate from D-fructose 6-phosphate: step 1/2. Functionally, isomerase that catalyzes the interconversion of fructose-6-P and mannose-6-P and has a critical role in the supply of D-mannose derivatives required for many eukaryotic glycosylation reactions. The chain is Mannose-6-phosphate isomerase (MPI) from Bos taurus (Bovine).